Consider the following 340-residue polypeptide: Flap endonuclease 1 (340 aa).

An N-domain region spans residues 1 to 98; it reads MGVPIGEIIP…KELEKRREAR (98 aa). Residues D27, D80, E152, E154, D173, D175, and D236 each coordinate Mg(2+). The tract at residues 116 to 258 is I-domain; that stretch reads EARKYAQRAT…KALEIVRHSK (143 aa). Residues 330–338 form an interaction with PCNA region; the sequence is KQSTLESWF.

This sequence belongs to the XPG/RAD2 endonuclease family. FEN1 subfamily. As to quaternary structure, interacts with PCNA. PCNA stimulates the nuclease activity without altering cleavage specificity. Requires Mg(2+) as cofactor.

Structure-specific nuclease with 5'-flap endonuclease and 5'-3' exonuclease activities involved in DNA replication and repair. During DNA replication, cleaves the 5'-overhanging flap structure that is generated by displacement synthesis when DNA polymerase encounters the 5'-end of a downstream Okazaki fragment. Binds the unpaired 3'-DNA end and kinks the DNA to facilitate 5' cleavage specificity. Cleaves one nucleotide into the double-stranded DNA from the junction in flap DNA, leaving a nick for ligation. Also involved in the base excision repair (BER) pathway. Acts as a genome stabilization factor that prevents flaps from equilibrating into structures that lead to duplications and deletions. Also possesses 5'-3' exonuclease activity on nicked or gapped double-stranded DNA. The sequence is that of Flap endonuclease 1 from Pyrococcus furiosus (strain ATCC 43587 / DSM 3638 / JCM 8422 / Vc1).